The chain runs to 285 residues: Bifunctional protein FolD (285 aa).

NADP(+) is bound by residues 166-168 (GAS), Ser-191, and Ile-232.

Belongs to the tetrahydrofolate dehydrogenase/cyclohydrolase family. Homodimer.

It carries out the reaction (6R)-5,10-methylene-5,6,7,8-tetrahydrofolate + NADP(+) = (6R)-5,10-methenyltetrahydrofolate + NADPH. It catalyses the reaction (6R)-5,10-methenyltetrahydrofolate + H2O = (6R)-10-formyltetrahydrofolate + H(+). The protein operates within one-carbon metabolism; tetrahydrofolate interconversion. Its function is as follows. Catalyzes the oxidation of 5,10-methylenetetrahydrofolate to 5,10-methenyltetrahydrofolate and then the hydrolysis of 5,10-methenyltetrahydrofolate to 10-formyltetrahydrofolate. The protein is Bifunctional protein FolD of Edwardsiella ictaluri (strain 93-146).